An 84-amino-acid polypeptide reads, in one-letter code: Mitochondrial import inner membrane translocase subunit tim9 (84 aa).

The Twin CX3C motif signature appears at 35–59; it reads CFSDCVQDFTSSKLSNKESECIAKC. Cystine bridges form between Cys-35–Cys-59 and Cys-39–Cys-55.

The protein belongs to the small Tim family. In terms of assembly, heterohexamer; composed of 3 copies of TIM9 and 3 copies of TIM10, named soluble 70 kDa complex. Associates with the TIM22 complex, whose core is composed of TIM22 and TIM54. Interacts with the transmembrane regions of multi-pass transmembrane proteins in transit.

It localises to the mitochondrion inner membrane. Mitochondrial intermembrane chaperone that participates in the import and insertion of multi-pass transmembrane proteins into the mitochondrial inner membrane. Also required for the transfer of beta-barrel precursors from the TOM complex to the sorting and assembly machinery (SAM complex) of the outer membrane. Acts as a chaperone-like protein that protects the hydrophobic precursors from aggregation and guide them through the mitochondrial intermembrane space. The protein is Mitochondrial import inner membrane translocase subunit tim9 (tim9) of Schizosaccharomyces pombe (strain 972 / ATCC 24843) (Fission yeast).